We begin with the raw amino-acid sequence, 204 residues long: Dual specificity protein phosphatase 18 (204 aa).

The Tyrosine-protein phosphatase domain maps to 19 to 160 (GLSQITKSLF…LIHYEFQLFG (142 aa)). The tract at residues 95 to 141 (MKQGRTLLHCAAGVSRSAALCLAYLMKYHVMSLLDAHAWTKSRRPII) is sufficient for mitochondrial localization. The active-site Phosphocysteine intermediate is Cys-104.

The protein belongs to the protein-tyrosine phosphatase family. Non-receptor class dual specificity subfamily.

It localises to the cytoplasm. The protein resides in the nucleus. Its subcellular location is the mitochondrion inner membrane. The enzyme catalyses O-phospho-L-tyrosyl-[protein] + H2O = L-tyrosyl-[protein] + phosphate. It catalyses the reaction O-phospho-L-seryl-[protein] + H2O = L-seryl-[protein] + phosphate. The catalysed reaction is O-phospho-L-threonyl-[protein] + H2O = L-threonyl-[protein] + phosphate. Functionally, can dephosphorylate single and diphosphorylated synthetic MAPK peptides, with preference for the phosphotyrosine and diphosphorylated forms over phosphothreonine. In vitro, dephosphorylates p-nitrophenyl phosphate (pNPP). The protein is Dual specificity protein phosphatase 18 (Dusp18) of Rattus norvegicus (Rat).